Reading from the N-terminus, the 514-residue chain is Na(+)/H(+) antiporter NhaB (514 aa).

Transmembrane regions (helical) follow at residues 23–43 (LALIAFLIANPLIFFINPFVA), 63–83 (PLLPGGLLAIEAVIIGMTSAA), 97–117 (LLLMFMVAGIYFMKQLLLFIF), 120–140 (LLLSIRSKMLLSLAFCMAAAF), 144–164 (FLDALTVVAVVISVAVGFYGI), 202–222 (LMMHAGVGTALGGVMTMVGEP), 238–258 (FFLRMSPVTVPVLICGLFTCV), 303–323 (AIIGVWLVTALALHLAEVGLI), 357–377 (LTVFFSIVAVIIDQHLFAPII), 391–411 (LFYLFNGLLSSISDNVFVGTI), 447–467 (ATPNGQAAFLFLLTSALAPLI), and 475–495 (VWMALPYTLVLTLVGLLCVEF).

It belongs to the NhaB Na(+)/H(+) (TC 2.A.34) antiporter family.

The protein resides in the cell inner membrane. It carries out the reaction 2 Na(+)(in) + 3 H(+)(out) = 2 Na(+)(out) + 3 H(+)(in). Its function is as follows. Na(+)/H(+) antiporter that extrudes sodium in exchange for external protons. This is Na(+)/H(+) antiporter NhaB from Citrobacter koseri (strain ATCC BAA-895 / CDC 4225-83 / SGSC4696).